Consider the following 340-residue polypeptide: GTPase Obg (340 aa).

Residues 1 to 159 (MGFIDEVKLC…KHVLLKLKVL (159 aa)) form the Obg domain. Residues 160-329 (SDVGIIGMPN…LSEKLKKSNS (170 aa)) form the OBG-type G domain. GTP-binding positions include 166-173 (GMPNAGKS), 191-195 (FTTVR), 212-215 (DIPG), 279-282 (NKCD), and 310-312 (NGD). Mg(2+) is bound by residues Ser-173 and Thr-193.

This sequence belongs to the TRAFAC class OBG-HflX-like GTPase superfamily. OBG GTPase family. Monomer. The cofactor is Mg(2+).

Its subcellular location is the cytoplasm. An essential GTPase which binds GTP, GDP and possibly (p)ppGpp with moderate affinity, with high nucleotide exchange rates and a fairly low GTP hydrolysis rate. Plays a role in control of the cell cycle, stress response, ribosome biogenesis and in those bacteria that undergo differentiation, in morphogenesis control. The chain is GTPase Obg from Wolbachia sp. subsp. Drosophila simulans (strain wRi).